Consider the following 713-residue polypeptide: MLNFFAAAPKGFEYSLAQELTEFGATEIKESVAGVYFTAPLALAYRITLWTRLASRIVLVIYKGPCESAEQLYNAAYCIDWSAHFSNRNTFSIDFHGTGGFINNTQFGALKIKDAIVDRFRDDGDARPNVARIDADIKIDAHFRNGVITIAMNFSGPSLHQRGYRSTTGEAPLKENLAANMLVRSGWKAAPTTLLDPFCGSGTVLIEAALMAADIAPGLQRSRFGFEHWRRHDKATWHEILEEAKARASLGVKRCDVKFYGSDIDSRLVALAKRNAQNAGVFELIDFKVANALNVEPPAAEGYLITNPPYGERLGSVSELLQLYYQLGDKFKKEFGGWKVAMLCSDIELISALKLKADKQMKMFNGALECAFNLYTLHAQSTRRDTPVLPEGVDIADIAPAFANRIKKNAKQLEKWAKKEGIDSYRLYDADIPEYNVAVDRYLDHIVVQEYMAPASIPEAVTKRRLSDVLLALPAAIGVDPHKITMKTRERQKGTNQYQKLDERKLELITTEYGAKFKLNLTGYLDTGLFLDHRLTRRLVGQKSKGRRVLNLFSYTGSASVHAALGGAKSVTTVDMSNTYLAWAKENFALNDLSGKQYEFVQADCLQWIRDSAHDKSAQYDLIFIDPPTFSNSKRMEDSFDVQRDHVNLLGMLIKLLSPNGEIVFSNNKRKFKMDTDTLVKMKIKVENIDDLTLPMDYKRNPHIHNTWLITHA.

The THUMP domain occupies 43–154; sequence LAYRITLWTR…NGVITIAMNF (112 aa).

This sequence belongs to the methyltransferase superfamily. RlmKL family.

Its subcellular location is the cytoplasm. The enzyme catalyses guanosine(2445) in 23S rRNA + S-adenosyl-L-methionine = N(2)-methylguanosine(2445) in 23S rRNA + S-adenosyl-L-homocysteine + H(+). It catalyses the reaction guanosine(2069) in 23S rRNA + S-adenosyl-L-methionine = N(2)-methylguanosine(2069) in 23S rRNA + S-adenosyl-L-homocysteine + H(+). Functionally, specifically methylates the guanine in position 2445 (m2G2445) and the guanine in position 2069 (m7G2069) of 23S rRNA. The polypeptide is Ribosomal RNA large subunit methyltransferase K/L (Shewanella sp. (strain ANA-3)).